Reading from the N-terminus, the 443-residue chain is 3-ketoacyl-CoA thiolase 1, peroxisomal (443 aa).

The transit peptide at 1–30 (MEKATERQRILLRHLQPSSSSDASLSASAC) directs the protein to the peroxisome. Cys130 (acyl-thioester intermediate) is an active-site residue. Catalysis depends on proton acceptor residues His385 and Cys417.

The protein belongs to the thiolase-like superfamily. Thiolase family. In terms of assembly, homodimer. Low levels in seedlings and leaves.

It is found in the peroxisome. The enzyme catalyses an acyl-CoA + acetyl-CoA = a 3-oxoacyl-CoA + CoA. The protein operates within lipid metabolism; fatty acid metabolism. Its function is as follows. Involved in fatty-acid beta-oxidation prior to gluconeogenesis during germination and subsequent seedling growth. Implicated in jasmonic acid (JA) biosynthesis. This chain is 3-ketoacyl-CoA thiolase 1, peroxisomal (KAT1), found in Arabidopsis thaliana (Mouse-ear cress).